The primary structure comprises 369 residues: UDP-N-acetylglucosamine--N-acetylmuramyl-(pentapeptide) pyrophosphoryl-undecaprenol N-acetylglucosamine transferase (369 aa).

UDP-N-acetyl-alpha-D-glucosamine-binding positions include 10–12 (TAG), asparagine 124, arginine 166, serine 196, isoleucine 251, and glutamine 296.

This sequence belongs to the glycosyltransferase 28 family. MurG subfamily.

It localises to the cell membrane. It catalyses the reaction di-trans,octa-cis-undecaprenyl diphospho-N-acetyl-alpha-D-muramoyl-L-alanyl-D-glutamyl-meso-2,6-diaminopimeloyl-D-alanyl-D-alanine + UDP-N-acetyl-alpha-D-glucosamine = di-trans,octa-cis-undecaprenyl diphospho-[N-acetyl-alpha-D-glucosaminyl-(1-&gt;4)]-N-acetyl-alpha-D-muramoyl-L-alanyl-D-glutamyl-meso-2,6-diaminopimeloyl-D-alanyl-D-alanine + UDP + H(+). The protein operates within cell wall biogenesis; peptidoglycan biosynthesis. Its function is as follows. Cell wall formation. Catalyzes the transfer of a GlcNAc subunit on undecaprenyl-pyrophosphoryl-MurNAc-pentapeptide (lipid intermediate I) to form undecaprenyl-pyrophosphoryl-MurNAc-(pentapeptide)GlcNAc (lipid intermediate II). This Acetivibrio thermocellus (strain ATCC 27405 / DSM 1237 / JCM 9322 / NBRC 103400 / NCIMB 10682 / NRRL B-4536 / VPI 7372) (Clostridium thermocellum) protein is UDP-N-acetylglucosamine--N-acetylmuramyl-(pentapeptide) pyrophosphoryl-undecaprenol N-acetylglucosamine transferase.